The following is a 443-amino-acid chain: Toxin YjjJ (443 aa).

The Proton acceptor role is filled by Asp-342.

This sequence belongs to the HipA Ser/Thr kinase family.

Its function is as follows. Toxic when overexpressed in E.coli, leading to long filamentous cells. The toxic effect is neutralized by non-cognate antitoxin HipB. Does not seem to inhibit DNA, RNA or protein synthesis, and unlike paralogous toxin HipA its toxic activity is not counteracted by overexpression of GltX. Binds DNA. Might be a protein kinase. The sequence is that of Toxin YjjJ (yjjJ) from Escherichia coli (strain K12).